Consider the following 623-residue polypeptide: Putative chaperone protein ClpB2, chloroplastic (623 aa).

Positions 1 to 123 (MNDLKFDPNV…KSEVEKLRGE (123 aa)) constitute a Clp R domain. Repeat regions lie at residues 6 to 71 (FDPN…NQSL) and 77 to 123 (RNLG…LRGE). An i region spans residues 129-375 (LKTYGTDLVE…HVKAQLDIQP (247 aa)). 172 to 179 (GEPGVGKT) contacts ATP. The stretch at 368–462 (KAQLDIQPEE…LQEAERQHDV (95 aa)) forms a coiled coil. 571-578 (GPTGVGKT) contacts ATP.

It belongs to the ClpA/ClpB family.

This chain is Putative chaperone protein ClpB2, chloroplastic (CLPB2), found in Arabidopsis thaliana (Mouse-ear cress).